The sequence spans 312 residues: Polyhedral envelope protein (312 aa).

This sequence belongs to the baculoviridae PE family.

Its subcellular location is the virion membrane. Major component of the polyhedra envelope. The chain is Polyhedral envelope protein from Lymantria dispar multicapsid nuclear polyhedrosis virus (LdMNPV).